The chain runs to 200 residues: NADH-quinone oxidoreductase subunit C (200 aa).

It belongs to the complex I 30 kDa subunit family. As to quaternary structure, NDH-1 is composed of 14 different subunits. Subunits NuoB, C, D, E, F, and G constitute the peripheral sector of the complex.

The protein localises to the cell inner membrane. The enzyme catalyses a quinone + NADH + 5 H(+)(in) = a quinol + NAD(+) + 4 H(+)(out). NDH-1 shuttles electrons from NADH, via FMN and iron-sulfur (Fe-S) centers, to quinones in the respiratory chain. The immediate electron acceptor for the enzyme in this species is believed to be ubiquinone. Couples the redox reaction to proton translocation (for every two electrons transferred, four hydrogen ions are translocated across the cytoplasmic membrane), and thus conserves the redox energy in a proton gradient. In Burkholderia thailandensis (strain ATCC 700388 / DSM 13276 / CCUG 48851 / CIP 106301 / E264), this protein is NADH-quinone oxidoreductase subunit C.